The primary structure comprises 396 residues: Elongation factor Tu (396 aa).

A tr-type G domain is found at 10–206 (KPHVNVGTIG…ALDTYIPTPE (197 aa)). The G1 stretch occupies residues 19–26 (GHVDHGKT). GTP is bound at residue 19 to 26 (GHVDHGKT). Residue threonine 26 participates in Mg(2+) binding. Positions 60-64 (GITIN) are G2. Positions 81–84 (DCPG) are G3. GTP is bound by residues 81–85 (DCPGH) and 136–139 (NKCD). Residues 136–139 (NKCD) are G4. Positions 174 to 176 (SAK) are G5.

This sequence belongs to the TRAFAC class translation factor GTPase superfamily. Classic translation factor GTPase family. EF-Tu/EF-1A subfamily. As to quaternary structure, monomer.

The protein localises to the cytoplasm. It carries out the reaction GTP + H2O = GDP + phosphate + H(+). In terms of biological role, GTP hydrolase that promotes the GTP-dependent binding of aminoacyl-tRNA to the A-site of ribosomes during protein biosynthesis. This Burkholderia mallei (strain NCTC 10247) protein is Elongation factor Tu.